A 253-amino-acid polypeptide reads, in one-letter code: uncharacterized protein (253 aa).

Residues 62–78 (WCSIGWSIGALIIFLVY) traverse the membrane as a helical segment. Residues 141-158 (TTPQTTTPEIPSSTEPQE) are compositionally biased toward low complexity. Residues 141–225 (TTPQTTTPEI…HDNQPLEERH (85 aa)) form a disordered region. A compositionally biased stretch (acidic residues) spans 200–216 (NVEDEPPPNKPEEEEDH).

It localises to the host membrane. This is an uncharacterized protein from Aedes vexans (Inland floodwater mosquito).